Here is a 237-residue protein sequence, read N- to C-terminus: RNA chaperone ProQ (237 aa).

The tract at residues 106-188 (AKARVQAQRA…QPRPVPVTDI (83 aa)) is disordered. A compositionally biased stretch (basic and acidic residues) spans 146-158 (PRREAGAAPENRK).

This sequence belongs to the ProQ family.

It is found in the cytoplasm. In terms of biological role, RNA chaperone with significant RNA binding, RNA strand exchange and RNA duplexing activities. May regulate ProP activity through an RNA-based, post-transcriptional mechanism. This chain is RNA chaperone ProQ, found in Yersinia pseudotuberculosis serotype O:1b (strain IP 31758).